Here is a 310-residue protein sequence, read N- to C-terminus: Homeobox protein dsc-1 (310 aa).

The homeobox DNA-binding region spans 180-239 (RRRFRTNFTELQSTFLEDSFKESHYPDHKAKKYMADFLKIPEDRITVWFQNRRAKWRRKE). Residues 262–310 (CFSAQHPDDGPNAKHPNSFGIPNQPMSLDQFPMNTEQDFPEFPSLQEHQ) are disordered. Over residues 281-298 (GIPNQPMSLDQFPMNTEQ) the composition is skewed to polar residues.

As to expression, expressed in the bilateral sensory neurons AWA, AWB, AWC, ASE, FLP and PVD. Also expressed in the enteric intestinal and anal depressor muscles.

The protein localises to the nucleus. It localises to the cell projection. The protein resides in the axon. Its subcellular location is the cytoplasm. In terms of biological role, transcriptional regulator which plays a role in the expulsion step of defecation by controlling enteric muscle-specific expression of exp-1 which is required for enteric muscle contraction. Not required for exp-1 expression in the PDA neuron. Also involved in controlling the length of the defecation cycle. The sequence is that of Homeobox protein dsc-1 from Caenorhabditis elegans.